A 445-amino-acid chain; its full sequence is tRNA-2-methylthio-N(6)-dimethylallyladenosine synthase (445 aa).

An MTTase N-terminal domain is found at 3–124; the sequence is KKLYIKTYGC…LPELISKVVR (122 aa). [4Fe-4S] cluster contacts are provided by C12, C48, C87, C162, C166, and C169. The 233-residue stretch at 148-380 folds into the Radical SAM core domain; the sequence is YPQGTSAFIS…QQELMAQQLA (233 aa). One can recognise a TRAM domain in the interval 383–445; it reads TSCVGSTMKV…SLNSLTGEIL (63 aa).

It belongs to the methylthiotransferase family. MiaB subfamily. In terms of assembly, monomer. [4Fe-4S] cluster is required as a cofactor.

The protein resides in the cytoplasm. It carries out the reaction N(6)-dimethylallyladenosine(37) in tRNA + (sulfur carrier)-SH + AH2 + 2 S-adenosyl-L-methionine = 2-methylsulfanyl-N(6)-dimethylallyladenosine(37) in tRNA + (sulfur carrier)-H + 5'-deoxyadenosine + L-methionine + A + S-adenosyl-L-homocysteine + 2 H(+). Functionally, catalyzes the methylthiolation of N6-(dimethylallyl)adenosine (i(6)A), leading to the formation of 2-methylthio-N6-(dimethylallyl)adenosine (ms(2)i(6)A) at position 37 in tRNAs that read codons beginning with uridine. The chain is tRNA-2-methylthio-N(6)-dimethylallyladenosine synthase from Rickettsia conorii (strain ATCC VR-613 / Malish 7).